A 120-amino-acid polypeptide reads, in one-letter code: 2-amino-4-hydroxy-6-hydroxymethyldihydropteridine pyrophosphokinase (120 aa).

Belongs to the HPPK family.

The enzyme catalyses 6-hydroxymethyl-7,8-dihydropterin + ATP = (7,8-dihydropterin-6-yl)methyl diphosphate + AMP + H(+). The protein operates within cofactor biosynthesis; tetrahydrofolate biosynthesis; 2-amino-4-hydroxy-6-hydroxymethyl-7,8-dihydropteridine diphosphate from 7,8-dihydroneopterin triphosphate: step 4/4. Its function is as follows. Catalyzes the transfer of pyrophosphate from adenosine triphosphate (ATP) to 6-hydroxymethyl-7,8-dihydropterin, an enzymatic step in folate biosynthesis pathway. The polypeptide is 2-amino-4-hydroxy-6-hydroxymethyldihydropteridine pyrophosphokinase (folK) (Pseudomonas putida (Arthrobacter siderocapsulatus)).